The sequence spans 37 residues: Large ribosomal subunit protein bL36 (37 aa).

It belongs to the bacterial ribosomal protein bL36 family.

In Mycobacterium ulcerans (strain Agy99), this protein is Large ribosomal subunit protein bL36.